Reading from the N-terminus, the 418-residue chain is CCA-adding enzyme (418 aa).

Residues S54 and R57 each coordinate ATP. Residues S54 and R57 each coordinate CTP. 3 residues coordinate Mg(2+): D66, D68, and D118. 3 residues coordinate ATP: H141, K161, and Y170. Positions 141, 161, and 170 each coordinate CTP.

The protein belongs to the tRNA nucleotidyltransferase/poly(A) polymerase family. Archaeal CCA-adding enzyme subfamily. In terms of assembly, homodimer. Mg(2+) is required as a cofactor.

The catalysed reaction is a tRNA precursor + 2 CTP + ATP = a tRNA with a 3' CCA end + 3 diphosphate. The enzyme catalyses a tRNA with a 3' CCA end + 2 CTP + ATP = a tRNA with a 3' CCACCA end + 3 diphosphate. In terms of biological role, catalyzes the addition and repair of the essential 3'-terminal CCA sequence in tRNAs without using a nucleic acid template. Adds these three nucleotides in the order of C, C, and A to the tRNA nucleotide-73, using CTP and ATP as substrates and producing inorganic pyrophosphate. tRNA 3'-terminal CCA addition is required both for tRNA processing and repair. Also involved in tRNA surveillance by mediating tandem CCA addition to generate a CCACCA at the 3' terminus of unstable tRNAs. While stable tRNAs receive only 3'-terminal CCA, unstable tRNAs are marked with CCACCA and rapidly degraded. The polypeptide is CCA-adding enzyme (Pyrobaculum islandicum (strain DSM 4184 / JCM 9189 / GEO3)).